The chain runs to 500 residues: NAD(P)H-quinone oxidoreductase chain 4, chloroplastic (500 aa).

15 consecutive transmembrane segments (helical) span residues 4-24, 31-51, 87-107, 111-131, 134-154, 167-187, 207-227, 242-262, 274-294, 305-325, 330-350, 358-378, 386-406, 416-436, and 462-482; these read LPWLTIIVILPISAGSSIPLF, IIRWYTLGICLLEFLLMTYTF, IGPISLTSFVTTLATLAAWPV, PRLFYFLMLAMYSGQVGLFAS, ILLFFLMWELELIPVYLLISM, FILYTAGGSIFISMGASSMGL, VVLEIVFYLGFFIAHAIKLPI, HYSTCMLLAGIPLKMGGYGLI, SLFSPWLVIVGAVQIIYAALT, IAYSSVSHMGFVIVGIGSMAD, GAILQMISHGLIGAALFFLAG, TLFLDGIGGMAIPMSKISTMF, LALPGMSGFVAESMVLLGIIT, IVIAAIMAIGMILTPIHLLSM, and IFISICLFLPVIGTGTYPDLV.

This sequence belongs to the complex I subunit 4 family.

It is found in the plastid. It localises to the chloroplast thylakoid membrane. The enzyme catalyses a plastoquinone + NADH + (n+1) H(+)(in) = a plastoquinol + NAD(+) + n H(+)(out). It carries out the reaction a plastoquinone + NADPH + (n+1) H(+)(in) = a plastoquinol + NADP(+) + n H(+)(out). This chain is NAD(P)H-quinone oxidoreductase chain 4, chloroplastic, found in Cycas taitungensis (Prince sago).